The following is a 164-amino-acid chain: C-type natriuretic peptide (164 aa).

The N-terminal stretch at 1-23 (MVASRLAAGGLLLLALLALALDG) is a signal peptide. Disordered stretches follow at residues 24-93 (KPAP…AAAA) and 115-134 (HPEH…GASR). Residues 24-142 (KPAPPQPLRK…SRRLKGVAKK (119 aa)) constitute a propeptide that is removed on maturation. Over residues 58–67 (AGGGGGGGRS) the composition is skewed to gly residues. Low complexity predominate over residues 68–93 (GSKAANAAPTAPKSKGGAAAAAAAAA). Residues 121–132 (GGGGGGGGGGGA) are compositionally biased toward gly residues. A disulfide bond links Cys148 and Cys164.

It belongs to the natriuretic peptide family. In terms of tissue distribution, expressed by the venom gland.

The protein resides in the secreted. Its function is as follows. Snake venom natriuretic peptide that has a vasorelaxant activity in rat aortic strips and a diuretic potency in anesthetized rats. May act by activating natriuretic receptors (NPR1 and/or NPR2). This chain is C-type natriuretic peptide, found in Philodryas olfersii (Green snake).